A 583-amino-acid chain; its full sequence is MSSDALKALLQWGASFGVIVPEELKFLYTDLKGIICVCEKDIDNPSIKIPPEIVISRNLPMKFFGLSESTKNINGWLKLFFAKIKFDRDNDTIVDNVRVNDKFKPYLDALPSRLNSPLVWNPSELKRLSSTNIGNSIHEKFEGIFKEWFELVSSSDMFDLERVADDVQTFHNLDELTYEALYEKILKITELQRPTIWYSFPAFLWSHLIFISRAFPEYVLNRNCPDNSIVLLPIVDLLNHDYRSKVKWYPENGWFCYEKIGTASQSRELSNNYGGKGNEELLSGYGFVLEDNIFDSVALKVKLPLDVVSTILETEPSLKLPLLSDYTTYAFENKDCVQQEKKATRSATDYINGVTYFINIQNEQCLEPLLDLFTYLSKAEEEDLHDLRARLQGIQMLRNALQSKLNSITGPPATDDSYAIDPYRVYCADVYTKGQKQILKEALTRLKKLEKTMLSENKHQLLTMSKILKNDPAFAETELPSLFSNEDGEEVIFESTYDLLILWILLKTKKNSYPTKYEWVGQQYTNFKQTAYISDDAKAFHTAYFEKQDDVDLAEVDHAIQFVVDNSFTRTSSTTEETILVRK.

The SET domain maps to 22 to 274 (EELKFLYTDL…QSRELSNNYG (253 aa)). Tyrosine 273 contacts S-adenosyl-L-methionine. Coiled coils occupy residues 378–407 (KAEE…KLNS) and 433–459 (KGQK…ENKH).

Belongs to the class V-like SAM-binding methyltransferase superfamily. RKM1 family.

The protein localises to the cytoplasm. Its subcellular location is the nucleus. Its function is as follows. S-adenosyl-L-methionine-dependent protein-lysine N-methyltransferase that monomethylates ribosomal protein S18 (RPS18A and RPS18B) at 'Lys-48' and dimethylates ribosomal protein L23 (RPL23A and RPL23B) at 'Lys-106' and 'Lys-110'. The protein is Ribosomal lysine N-methyltransferase 1 of Saccharomyces cerevisiae (strain ATCC 204508 / S288c) (Baker's yeast).